A 182-amino-acid chain; its full sequence is Large ribosomal subunit protein uL6 (182 aa).

Belongs to the universal ribosomal protein uL6 family. Part of the 50S ribosomal subunit.

Its function is as follows. This protein binds to the 23S rRNA, and is important in its secondary structure. It is located near the subunit interface in the base of the L7/L12 stalk, and near the tRNA binding site of the peptidyltransferase center. The sequence is that of Large ribosomal subunit protein uL6 from Dehalococcoides mccartyi (strain ATCC BAA-2100 / JCM 16839 / KCTC 5957 / BAV1).